The sequence spans 283 residues: Thymidylate synthase (283 aa).

Arg-22 provides a ligand contact to dUMP. Cys-160 acts as the Nucleophile in catalysis. Residues Arg-180–Asp-183, Asn-191, and His-221–Tyr-223 contribute to the dUMP site. Asp-183 provides a ligand contact to (6R)-5,10-methylene-5,6,7,8-tetrahydrofolate. Ser-282 lines the (6R)-5,10-methylene-5,6,7,8-tetrahydrofolate pocket.

This sequence belongs to the thymidylate synthase family. Bacterial-type ThyA subfamily. In terms of assembly, homodimer.

The protein resides in the cytoplasm. The catalysed reaction is dUMP + (6R)-5,10-methylene-5,6,7,8-tetrahydrofolate = 7,8-dihydrofolate + dTMP. It functions in the pathway pyrimidine metabolism; dTTP biosynthesis. Its function is as follows. Catalyzes the reductive methylation of 2'-deoxyuridine-5'-monophosphate (dUMP) to 2'-deoxythymidine-5'-monophosphate (dTMP) while utilizing 5,10-methylenetetrahydrofolate (mTHF) as the methyl donor and reductant in the reaction, yielding dihydrofolate (DHF) as a by-product. This enzymatic reaction provides an intracellular de novo source of dTMP, an essential precursor for DNA biosynthesis. The polypeptide is Thymidylate synthase (Haemophilus influenzae (strain PittGG)).